The sequence spans 215 residues: C-type lectin domain family 4 member D (215 aa).

At 1 to 17 the chain is on the cytoplasmic side; the sequence is MGLEKPQSKLEGGMHPQ. Residues 18-38 traverse the membrane as a helical; Signal-anchor for type II membrane protein segment; that stretch reads LIPSVIAVVFILLLSVCFIAS. Residues 39 to 215 are Extracellular-facing; it reads CLVTHHNFSR…ICKIPGTTLN (177 aa). N-linked (GlcNAc...) asparagine glycosylation occurs at asparagine 45. Cysteines 84 and 95 form a disulfide. Residues 91 to 208 enclose the C-type lectin domain; it reads FQSNCYFPLT…CNFEASRICK (118 aa). Asparagine 102 and asparagine 111 each carry an N-linked (GlcNAc...) asparagine glycan. Cystine bridges form between cysteine 112–cysteine 207 and cysteine 182–cysteine 199. Residues glutamate 173, aspartate 175, asparagine 195, and aspartate 196 each coordinate Ca(2+).

Heterodimer with CLEC4E; disulfide-linked. CLEC4E acts as a bridge for interaction between CLEC4D and FCER1G to form a functional complex. Heterodimer with CLEC6A; this heterodimer forms a pattern recognition receptor (PRR) against fungal infection. As to expression, expressed weakly in peripheral blood leukocytes, bone marrow and spleen. Expression is confined mostly in monocytes and macrophage and seems to be up-regulated by IL-6, IL-10, TNF-alpha and IFN-gamma.

It localises to the cell membrane. Its function is as follows. Calcium-dependent lectin that acts as a pattern recognition receptor (PRR) of the innate immune system: recognizes damage-associated molecular patterns (DAMPs) of pathogen-associated molecular patterns (PAMPs) of bacteria and fungi. The PAMPs include alpha-mannans on C.albicans hypheas and mycobacterial trehalose 6,6'-dimycolate (TDM). Interacts with signaling adapter Fc receptor gamma chain/FCER1G, likely via CLEC4E, to form a functional complex in myeloid cells. Binding of mycobacterial TDM or C.albicans alpha-mannans to this receptor complex leads to phosphorylation of the immunoreceptor tyrosine-based activation motif (ITAM) of FCER1G, triggering activation of SYK, CARD9 and NF-kappa-B, consequently driving maturation of antigen-presenting cells and shaping antigen-specific priming of T-cells toward effector T-helper 1 and T-helper 17 cell subtypes. The heterodimer formed with CLEC6A is active against fungal infection. Functions as an endocytic receptor. May be involved in antigen uptake at the site of infection, either for clearance of the antigen, or for processing and further presentation to T-cells. This Homo sapiens (Human) protein is C-type lectin domain family 4 member D.